The following is a 262-amino-acid chain: Phycoerythrobilin:ferredoxin oxidoreductase (262 aa).

Belongs to the HY2 family.

The catalysed reaction is (3Z)-phycoerythrobilin + oxidized 2[4Fe-4S]-[ferredoxin] = 15,16-dihydrobiliverdin + reduced 2[4Fe-4S]-[ferredoxin] + 2 H(+). In terms of biological role, catalyzes the two-electron reduction of the C2 and C3(1) diene system of 15,16-dihydrobiliverdin. In Synechococcus sp. (strain RCC307), this protein is Phycoerythrobilin:ferredoxin oxidoreductase.